A 211-amino-acid chain; its full sequence is Ras-related protein RABB1c (211 aa).

Position 2 is an N-acetylserine (S2). Residue G13–C21 participates in GTP binding. The Effector region signature appears at H35–F43. Residues D61–Q65, N119–D122, and S149–K151 contribute to the GTP site. S-geranylgeranyl cysteine attachment occurs at residues C209 and C210.

The protein belongs to the small GTPase superfamily. Rab family.

It localises to the cell membrane. Intracellular vesicle trafficking and protein transport. The protein is Ras-related protein RABB1c (RABB1C) of Arabidopsis thaliana (Mouse-ear cress).